The chain runs to 659 residues: uncharacterized protein (659 aa).

Residues Met-1–Cys-25 form the signal peptide. The Lumenal portion of the chain corresponds to Ser-26 to Arg-556. 4 N-linked (GlcNAc...) asparagine glycosylation sites follow: Asn-94, Asn-111, Asn-128, and Asn-142. The region spanning Ala-173–Met-335 is the SUN domain. Asn-393 and Asn-415 each carry an N-linked (GlcNAc...) asparagine glycan. The disordered stretch occupies residues Thr-417–Ala-445. The segment covering Tyr-423–Ile-434 has biased composition (polar residues). N-linked (GlcNAc...) asparagine glycans are attached at residues Asn-495 and Asn-504. Residues Leu-557–Val-574 traverse the membrane as a helical segment. The Cytoplasmic portion of the chain corresponds to Ser-575–Cys-659. Disordered regions lie at residues Asn-580 to Glu-603 and Lys-632 to Cys-659. Positions Leu-581–Ile-592 are enriched in polar residues. Positions Ser-641–Ile-651 are enriched in basic and acidic residues.

The protein belongs to the SLP1 family. In terms of assembly, interacts with EMP65.

It localises to the endoplasmic reticulum membrane. Functionally, may be involved in membrane protein folding. This is an uncharacterized protein from Schizosaccharomyces pombe (strain 972 / ATCC 24843) (Fission yeast).